Reading from the N-terminus, the 358-residue chain is Aromatic amino acid aminotransferase (358 aa).

Lys222 carries the N6-(pyridoxal phosphate)lysine modification.

Belongs to the class-II pyridoxal-phosphate-dependent aminotransferase family. In terms of assembly, homodimer. Pyridoxal 5'-phosphate is required as a cofactor.

The enzyme catalyses an aromatic L-alpha-amino acid + 2-oxoglutarate = an aromatic oxo-acid + L-glutamate. Its function is as follows. Aminotransferase that catalyzes the conversion of aromatic amino acids and 2-oxoglutarate into corresponding aromatic oxo acids and L-glutamate. In Mycobacterium sp. (strain JLS), this protein is Aromatic amino acid aminotransferase.